The primary structure comprises 111 residues: uncharacterized protein (111 aa).

The interval 66 to 94 is disordered; that stretch reads PVPTATPSLPRSGFTSSAKKIKESRKQKS. Over residues 70-83 the composition is skewed to polar residues; it reads ATPSLPRSGFTSSA.

The protein resides in the plastid. It is found in the chloroplast. This is an uncharacterized protein from Chlamydomonas reinhardtii (Chlamydomonas smithii).